Consider the following 967-residue polypeptide: MGDSDDEYDRKRRDKFRGERSAGGGGDSYGRGADRPDRSRGRDDWPDRVRPRQDYRDYRPPPRDRGYSPAREGPTVKRMRGDTWGDEGRHRFGAHDGYGMYGYAHDHFGMHPTVGPYGHQHATHQREPVVSGDMQTQPCMMTLKQFLATQDDSISDSDAITKYNEYKLEFRRQQMNEFFVAHKDEEWFKIKYHPEESQKRKEEQLSFLKRRCEVFLELLKSKEIGKVSVDASNTDALLRLLDTVVIKLEGGTEEDLKVLDIKPSVVEAAARTPATLNEEKVKTESKVDATAKELAVKMEEDSSKQETETDVLSVPQSEEDARNGNSKIKEELSKSMDDGNENGDKSKSNDAQKSEKEIAEVEHEAHKHESEDRKKRSRSDSGSSSSSSSSSSSSESEEEKDERMNKEDNEDEENMRIPEEEKKSDSADTMDNINRDKEVDEGKPVCDAEDLNTADDRDDNADQNKEQNEFEETTKDKNSSDPVNDENKENSDKKSQQEGDSKAETIDLAKDPADGGSRALHRTSSIFLRNLAPSITKAEVEAMCRRYNGFLRVAIADPLLERRWFRRGWVTFKREVNIKEICWNLNNIRLRDCELGAIVNKDLSRRVRPVNGITCHKTVVRSDIKLGAKIAHNLDDKWGLWKETPTAASGTGEAGDKNGSEVQPEESFGLQSKNPVLQNITDYLIEEASAEEEELLGLSEDSKKVSEGELIERDPQLIEVLDRLILYLRIVHSVDFYNHCEYPYEDEMPNRCGIIHARGPPSQSKVMSNEIQEYIRTFEGKMASFLTRMVDIDETDMKKLGAKDAEAEVEKFITANTQELAKDKWLCPLSGKKFKGPDFVRKHIFNKHAEKVEEVRKEVEYFNNYLKDSKRPQLPEHPGNAKKPGSEGATSATANASVGAGGYRNQPFGMSHSYAPMYASYAAASMMAPNPRGRAGFGRGGRMGGPDYRPVIHYRDLDAPREPDEFL.

4 disordered regions span residues 1–84 (MGDS…GDTW), 296–518 (VKME…GGSR), 645–669 (PTAASGTGEAGDKNGSEVQPEESFG), and 868–893 (DSKRPQLPEHPGNAKKPGSEGATSAT). Composition is skewed to basic and acidic residues over residues 8 to 20 (YDRKRRDKFRGER), 32 to 66 (GADRPDRSRGRDDWPDRVRPRQDYRDYRPPPRDRG), 296 to 307 (VKMEEDSSKQET), and 319 to 374 (EDAR…EDRK). Residues 380–394 (DSGSSSSSSSSSSSS) are compositionally biased toward low complexity. Composition is skewed to basic and acidic residues over residues 414–426 (NMRIPEEEKKSDS) and 433–446 (INRDKEVDEGKPVC). Over residues 447–459 (DAEDLNTADDRDD) the composition is skewed to acidic residues. Basic and acidic residues predominate over residues 460-513 (NADQNKEQNEFEETTKDKNSSDPVNDENKENSDKKSQQEGDSKAETIDLAKDPA).

This sequence belongs to the ARS2 family.

The protein localises to the nucleus. Its function is as follows. Acts as a mediator between the cap-binding complex (CBC) and RNA-mediated gene silencing (RNAi). Involved in innate immunity via the short interfering RNAs (siRNAs) processing machinery by restricting the viral RNA production. Also involved microRNA (miRNA)-mediated silencing by contributing to the stability and delivery of primary miRNA transcripts to the primary miRNA processing complex. In Anopheles gambiae (African malaria mosquito), this protein is Serrate RNA effector molecule homolog (Ars2).